The following is a 152-amino-acid chain: Protein SprT-like (152 aa).

In terms of domain architecture, SprT-like spans glutamine 7–isoleucine 148. Zn(2+) is bound at residue histidine 67. Glutamate 68 is an active-site residue. Histidine 71 contacts Zn(2+).

It belongs to the SprT family. Zn(2+) serves as cofactor.

It is found in the cytoplasm. The polypeptide is Protein SprT-like (Bacillus cereus (strain AH187)).